Here is a 351-residue protein sequence, read N- to C-terminus: Foldase protein PrsA 1 (351 aa).

Residues 1–22 (MKNSNKLIASVVTLASVMALAA) form the signal peptide. Cys-23 is lipidated: N-palmitoyl cysteine. Residue Cys-23 is the site of S-diacylglycerol cysteine attachment. The PpiC domain maps to 145 to 240 (TPTMAVEMIT…KKFYIVKVTK (96 aa)). Composition is skewed to low complexity over residues 303-317 (KTKA…SESS) and 326-351 (ESEQ…PAAQ). The interval 303-351 (KTKAASESSTTSESSKAAEENPSESEQTQTSSAEEPTETEAQTQEPAAQ) is disordered.

The protein belongs to the PrsA family.

It localises to the cell membrane. The enzyme catalyses [protein]-peptidylproline (omega=180) = [protein]-peptidylproline (omega=0). In terms of biological role, plays a major role in protein secretion by helping the post-translocational extracellular folding of several secreted proteins. The sequence is that of Foldase protein PrsA 1 from Streptococcus pyogenes serotype M6 (strain ATCC BAA-946 / MGAS10394).